The primary structure comprises 469 residues: Tetratricopeptide repeat protein 38 (469 aa).

TPR repeat units lie at residues 107 to 140 (REML…HPTD), 179 to 212 (SYVK…DQTD), and 251 to 284 (CHVY…QCFA).

The protein belongs to the TTC38 family.

The sequence is that of Tetratricopeptide repeat protein 38 (ttc38) from Xenopus tropicalis (Western clawed frog).